Consider the following 352-residue polypeptide: Ion-translocating oxidoreductase complex subunit D (352 aa).

5 helical membrane-spanning segments follow: residues 20–40 (IMLLVLLAAVPGIAAQLWFFG), 42–62 (GTLVQILLASVSALLAEALVL), 78–109 (ALLTGLLLAVSIPPLAPWWMVVLGTVFAVIIA), 123–143 (PAMIGYVVLLISFPVQMTSWL), and 148–168 (IAVNILGFIDAIQVIFSGHTA). FMN phosphoryl threonine is present on Thr187. 5 helical membrane-spanning segments follow: residues 214–234 (ILAGAGWQWVNLAWLAGGVWL), 242–262 (WHIPLSFLVTLALCATLGWLF), 267–287 (LAAPQIHLLSGATMLGAFFIL), 301–321 (LIFGALAGLLVWLIRSFGGYP), and 322–342 (DGVAFAVLLANITVPLIDYYT).

It belongs to the NqrB/RnfD family. In terms of assembly, the complex is composed of six subunits: RsxA, RsxB, RsxC, RsxD, RsxE and RsxG. It depends on FMN as a cofactor.

The protein localises to the cell inner membrane. Its function is as follows. Part of a membrane-bound complex that couples electron transfer with translocation of ions across the membrane. Required to maintain the reduced state of SoxR. The sequence is that of Ion-translocating oxidoreductase complex subunit D from Shigella dysenteriae serotype 1 (strain Sd197).